Here is a 255-residue protein sequence, read N- to C-terminus: Diphthine synthase (255 aa).

S-adenosyl-L-methionine is bound by residues Leu9, Asp85, Val88, 113–114 (SI), Leu164, Ala207, and His232.

It belongs to the diphthine synthase family. As to quaternary structure, homodimer.

The catalysed reaction is 2-[(3S)-amino-3-carboxypropyl]-L-histidyl-[translation elongation factor 2] + 3 S-adenosyl-L-methionine = diphthine-[translation elongation factor 2] + 3 S-adenosyl-L-homocysteine + 3 H(+). It functions in the pathway protein modification; peptidyl-diphthamide biosynthesis. S-adenosyl-L-methionine-dependent methyltransferase that catalyzes the trimethylation of the amino group of the modified target histidine residue in translation elongation factor 2 (EF-2), to form an intermediate called diphthine. The three successive methylation reactions represent the second step of diphthamide biosynthesis. This chain is Diphthine synthase, found in Methanococcus maripaludis (strain DSM 14266 / JCM 13030 / NBRC 101832 / S2 / LL).